Reading from the N-terminus, the 393-residue chain is Putative zinc metalloprotease Rip3 (393 aa).

2 helical membrane passes run 10–30 and 45–65; these read IAGFVVNVHWSVLVILWLFTW and AVVYWLLGAGGAVMLLASLLA. Histidine 66 is a binding site for Zn(2+). Glutamate 67 is a catalytic residue. Histidine 70 is a Zn(2+) binding site. 4 helical membrane passes run 77-97, 108-128, 136-156, and 207-227; these read AGVSVESVTLWLFGGVTALGG, IAFAGPATSLALSATFGALAI, PAIVISVAWWLATVNLLLGLF, and FVAGGLVGGVWLAFIGWFIFA. CBS domains are found at residues 251-308 and 315-376; these read MTAQ…RRST and ALPL…AQPE.

The protein belongs to the peptidase M50B family. The cofactor is Zn(2+).

The protein localises to the cell membrane. The protein is Putative zinc metalloprotease Rip3 (rip3) of Mycobacterium tuberculosis (strain ATCC 35801 / TMC 107 / Erdman).